The sequence spans 998 residues: Bifunctional glutamine synthetase adenylyltransferase/adenylyl-removing enzyme (998 aa).

The adenylyl removase stretch occupies residues 1 to 487 (MVVTKPATQR…LHAKLFYQPL (487 aa)). The segment at 492-998 (GPAGLEIRHG…KAVVCKVFGS (507 aa)) is adenylyl transferase.

Belongs to the GlnE family. The cofactor is Mg(2+).

It carries out the reaction [glutamine synthetase]-O(4)-(5'-adenylyl)-L-tyrosine + phosphate = [glutamine synthetase]-L-tyrosine + ADP. The enzyme catalyses [glutamine synthetase]-L-tyrosine + ATP = [glutamine synthetase]-O(4)-(5'-adenylyl)-L-tyrosine + diphosphate. In terms of biological role, involved in the regulation of glutamine synthetase GlnA, a key enzyme in the process to assimilate ammonia. When cellular nitrogen levels are high, the C-terminal adenylyl transferase (AT) inactivates GlnA by covalent transfer of an adenylyl group from ATP to specific tyrosine residue of GlnA, thus reducing its activity. Conversely, when nitrogen levels are low, the N-terminal adenylyl removase (AR) activates GlnA by removing the adenylyl group by phosphorolysis, increasing its activity. The regulatory region of GlnE binds the signal transduction protein PII (GlnB) which indicates the nitrogen status of the cell. In Mycolicibacterium paratuberculosis (strain ATCC BAA-968 / K-10) (Mycobacterium paratuberculosis), this protein is Bifunctional glutamine synthetase adenylyltransferase/adenylyl-removing enzyme.